A 460-amino-acid chain; its full sequence is MAVKRMWGGRFEATGAKWVEEFGASISFDQQMAAEDLEGSLAHVTMLKETKILPAADADQIITGLKKLQDQLEAGELTFTVENEDIHMNLEALLTEEIGPVAGKLHTARSRNDQVATDLHLYVKHRLPHVIQAIKDLQKVLVEKAAANVETIMPGYTHLQHAQPISYGHYLMAYFQMLQRDVERFEFNQQHTDLMPLGAAALAGTTFPIDRELTAKLLDFQAPYANSLDAVSDRDFVLEFLANAAILMTHLSRLCEEIIMWCSYEFGYLELSDQYSTGSSIMPQKKNPDMAELVRGKTGRVNGHLLGLLTTIKGLPLAYNKDLQEDKEGLFDAVKTIMPSLKVVAGMLETAHVNKEKMAQATERDFSNATELADYLATKGIPFRQAHAIVGQLVLEGLKTGTTLQEIPLAKYQEIDPAIGEDVYHDLQSKVAVERRNSLGGTGFDQVKAQIEAAKQLLSK.

Belongs to the lyase 1 family. Argininosuccinate lyase subfamily.

It localises to the cytoplasm. It carries out the reaction 2-(N(omega)-L-arginino)succinate = fumarate + L-arginine. The protein operates within amino-acid biosynthesis; L-arginine biosynthesis; L-arginine from L-ornithine and carbamoyl phosphate: step 3/3. The sequence is that of Argininosuccinate lyase from Limosilactobacillus fermentum (strain NBRC 3956 / LMG 18251) (Lactobacillus fermentum).